The chain runs to 196 residues: Nucleoid occlusion factor SlmA (196 aa).

The 62-residue stretch at 7–68 (SNRREEILQA…GLIEFIEEAL (62 aa)) folds into the HTH tetR-type domain. The H-T-H motif DNA-binding region spans 31-50 (TTVKLAKQVGVSEAALYRHF). A coiled-coil region spans residues 65 to 142 (EEALMSRINR…QLRQILRERK (78 aa)).

Belongs to the nucleoid occlusion factor SlmA family. As to quaternary structure, homodimer. Interacts with FtsZ.

Its subcellular location is the cytoplasm. It is found in the nucleoid. Required for nucleoid occlusion (NO) phenomenon, which prevents Z-ring formation and cell division over the nucleoid. Acts as a DNA-associated cell division inhibitor that binds simultaneously chromosomal DNA and FtsZ, and disrupts the assembly of FtsZ polymers. SlmA-DNA-binding sequences (SBS) are dispersed on non-Ter regions of the chromosome, preventing FtsZ polymerization at these regions. The protein is Nucleoid occlusion factor SlmA of Vibrio atlanticus (strain LGP32) (Vibrio splendidus (strain Mel32)).